A 688-amino-acid polypeptide reads, in one-letter code: Eukaryotic translation initiation factor 3 subunit B (688 aa).

The segment at 1–28 (MAKKKGDQYDSDGAEDQDYDEEPVFEDP) is disordered. Residues 9–25 (YDSDGAEDQDYDEEPVF) are compositionally biased toward acidic residues. The RRM domain maps to 57 to 141 (NVIVVDNIPV…HTLLVNLFSD (85 aa)). WD repeat units lie at residues 208–246 (RERF…KINK), 247–287 (FAHS…EKRS), 291–329 (DGSS…LLDK), 332–367 (IKVQ…TLLE), 440–482 (EVKE…EPTM), and 527–572 (GDHY…KRVN). Residues 612–643 (DRVRMTRASKELLEKRAKLREQFVEYRAKRVN) adopt a coiled-coil conformation.

Belongs to the eIF-3 subunit B family. In terms of assembly, component of the eukaryotic translation initiation factor 3 (eIF-3) complex.

The protein resides in the cytoplasm. Its function is as follows. RNA-binding component of the eukaryotic translation initiation factor 3 (eIF-3) complex, which is involved in protein synthesis of a specialized repertoire of mRNAs and, together with other initiation factors, stimulates binding of mRNA and methionyl-tRNAi to the 40S ribosome. The eIF-3 complex specifically targets and initiates translation of a subset of mRNAs involved in cell proliferation. This Culex quinquefasciatus (Southern house mosquito) protein is Eukaryotic translation initiation factor 3 subunit B.